A 113-amino-acid polypeptide reads, in one-letter code: Probable 4-amino-4-deoxy-L-arabinose-phosphoundecaprenol flippase subunit ArnE (113 aa).

3 consecutive transmembrane segments (helical) span residues 40 to 60, 64 to 84, and 92 to 112; these read FGWLMLAALLLGIGLLLWLLV, LPLGVAYPLLSINFVLVTLLA, and VDRHHWWGIALIVIGIYLMQG.

Belongs to the ArnE family. As to quaternary structure, heterodimer of ArnE and ArnF.

The protein resides in the cell inner membrane. It participates in bacterial outer membrane biogenesis; lipopolysaccharide biosynthesis. Translocates 4-amino-4-deoxy-L-arabinose-phosphoundecaprenol (alpha-L-Ara4N-phosphoundecaprenol) from the cytoplasmic to the periplasmic side of the inner membrane. This is Probable 4-amino-4-deoxy-L-arabinose-phosphoundecaprenol flippase subunit ArnE from Pectobacterium atrosepticum (strain SCRI 1043 / ATCC BAA-672) (Erwinia carotovora subsp. atroseptica).